A 340-amino-acid polypeptide reads, in one-letter code: Erlin-2 (340 aa).

Residues 1–3 (MAQ) are Cytoplasmic-facing. A helical membrane pass occupies residues 4–24 (LGAVVAVASSFFCASLFSAVH). The Lumenal portion of the chain corresponds to 25–340 (KIEEGHIGVY…EPLEAPTKEN (316 aa)). N-linked (GlcNAc...) asparagine glycosylation is present at Asn106. Positions 177–309 (EAIRRNYELM…DIPNMFMDSA (133 aa)) are interaction with ERLIN1. Lys267 is modified (N6-acetyllysine).

This sequence belongs to the band 7/mec-2 family. In terms of assembly, forms a heteromeric complex with ERLIN1. In complex with ERLIN1, interacts with RNF170. Interacts with activated ITPR1, independently of the degree of ITPR1 polyubiquitination. Interacts with SCAP, INSIG1, SREBF1 and SREBF2 under cholesterol sufficiency conditions; indicative for an association with the SCAP-SREBP-INSIG complex. Probably part of an AMFR/gp78 and INSIG1-containing ubiquitin ligase complex involved in ERAD of HMGCR. Interacts with TMUB1; TMUB1 bridges the association with AMFR. Interacts with SYVN1 and RNF139. Interacts with TMEM259. Interacts with TMEM41B. Post-translationally, deubiquitinated by USP25; leading to stabilization.

Its subcellular location is the endoplasmic reticulum membrane. Functionally, component of the ERLIN1/ERLIN2 complex which mediates the endoplasmic reticulum-associated degradation (ERAD) of inositol 1,4,5-trisphosphate receptors (IP3Rs) such as ITPR1. Promotes sterol-accelerated ERAD of HMGCR probably implicating an AMFR/gp78-containing ubiquitin ligase complex. Involved in regulation of cellular cholesterol homeostasis by regulation the SREBP signaling pathway. May promote ER retention of the SCAP-SREBF complex. In Mus musculus (Mouse), this protein is Erlin-2 (Erlin2).